We begin with the raw amino-acid sequence, 446 residues long: C4-dicarboxylate transport protein (446 aa).

Helical transmembrane passes span 20-40 (HLYVQVLAAIAIGILLGHFYP), 56-76 (LVKMVIAPVIFLTVVTGIAGM), 91-111 (IYFLTFSTLALIIGLIIANVV), 160-180 (GDILQVLFFSVLFGIALAGVG), 200-220 (LVHILMKAAPIGAFGAMAFTI), 233-253 (FLILTFYITSFLFVVVVLGLV), 319-339 (IYMTLAALFIAQATDIHLSLG), 344-364 (LLLVAMLSSKGAAGITGAGFI), and 367-387 (AATLSVVPTVPLAGMALILGI).

This sequence belongs to the dicarboxylate/amino acid:cation symporter (DAACS) (TC 2.A.23) family.

Its subcellular location is the cell inner membrane. In terms of biological role, responsible for the transport of dicarboxylates such as succinate, fumarate, and malate from the periplasm across the membrane. This Azorhizobium caulinodans (strain ATCC 43989 / DSM 5975 / JCM 20966 / LMG 6465 / NBRC 14845 / NCIMB 13405 / ORS 571) protein is C4-dicarboxylate transport protein.